Here is a 364-residue protein sequence, read N- to C-terminus: Uroporphyrinogen decarboxylase (364 aa).

Residues 28–32 (RQAGR), aspartate 78, tyrosine 160, threonine 215, and histidine 333 each bind substrate.

This sequence belongs to the uroporphyrinogen decarboxylase family. As to quaternary structure, homodimer.

The protein localises to the cytoplasm. The catalysed reaction is uroporphyrinogen III + 4 H(+) = coproporphyrinogen III + 4 CO2. The protein operates within porphyrin-containing compound metabolism; protoporphyrin-IX biosynthesis; coproporphyrinogen-III from 5-aminolevulinate: step 4/4. Its function is as follows. Catalyzes the decarboxylation of four acetate groups of uroporphyrinogen-III to yield coproporphyrinogen-III. The polypeptide is Uroporphyrinogen decarboxylase (Burkholderia cenocepacia (strain ATCC BAA-245 / DSM 16553 / LMG 16656 / NCTC 13227 / J2315 / CF5610) (Burkholderia cepacia (strain J2315))).